Consider the following 239-residue polypeptide: tRNA (guanine-N(7)-)-methyltransferase (239 aa).

4 residues coordinate S-adenosyl-L-methionine: E69, E94, D121, and D144. Residue D144 is part of the active site. Residue K148 coordinates substrate. The segment at 150 to 155 (RHNKRR) is interaction with RNA. Residues D180 and 217-220 (TKFE) each bind substrate.

This sequence belongs to the class I-like SAM-binding methyltransferase superfamily. TrmB family. In terms of assembly, monomer.

It catalyses the reaction guanosine(46) in tRNA + S-adenosyl-L-methionine = N(7)-methylguanosine(46) in tRNA + S-adenosyl-L-homocysteine. The protein operates within tRNA modification; N(7)-methylguanine-tRNA biosynthesis. Functionally, catalyzes the formation of N(7)-methylguanine at position 46 (m7G46) in tRNA. The polypeptide is tRNA (guanine-N(7)-)-methyltransferase (Salmonella typhi).